The following is a 484-amino-acid chain: Proline--tRNA ligase (484 aa).

Belongs to the class-II aminoacyl-tRNA synthetase family. ProS type 3 subfamily. As to quaternary structure, homodimer.

The protein resides in the cytoplasm. The catalysed reaction is tRNA(Pro) + L-proline + ATP = L-prolyl-tRNA(Pro) + AMP + diphosphate. In terms of biological role, catalyzes the attachment of proline to tRNA(Pro) in a two-step reaction: proline is first activated by ATP to form Pro-AMP and then transferred to the acceptor end of tRNA(Pro). In Haloarcula marismortui (strain ATCC 43049 / DSM 3752 / JCM 8966 / VKM B-1809) (Halobacterium marismortui), this protein is Proline--tRNA ligase.